The primary structure comprises 202 residues: Nucleoside triphosphate pyrophosphatase (202 aa).

D79 acts as the Proton acceptor in catalysis.

The protein belongs to the Maf family. Requires a divalent metal cation as cofactor.

The protein localises to the cytoplasm. The enzyme catalyses a ribonucleoside 5'-triphosphate + H2O = a ribonucleoside 5'-phosphate + diphosphate + H(+). It carries out the reaction a 2'-deoxyribonucleoside 5'-triphosphate + H2O = a 2'-deoxyribonucleoside 5'-phosphate + diphosphate + H(+). Nucleoside triphosphate pyrophosphatase. May have a dual role in cell division arrest and in preventing the incorporation of modified nucleotides into cellular nucleic acids. This chain is Nucleoside triphosphate pyrophosphatase, found in Nitrobacter hamburgensis (strain DSM 10229 / NCIMB 13809 / X14).